Reading from the N-terminus, the 429-residue chain is MAELIEEVSTATHASLNACDPIVVNSEALPMQALYQLSATGAQQQNQQIPIGLSNSLLYQQLAAHQQIAAQQHQQQLAVSAAHQTQNNIMLATSAPSLINHMENSTDGKVKDDPNSDYDLQLSIQQQLAAAAQAAQMGQTQIGPQIVGQQGQPVVATTAGSTNGSAAVTQPDPSTSSGPDGPKRLHVSNIPFRFRDPDLKTMFEKFGVVSDVEIIFNERGSKGFGFVTMERPQDAERARQELHGSMIEGRKIEVNCATARVHSKKVKPTGGILDQMNPLMAQSALAAQAQMNRALLLRSPLVAQSLLGRGAALIPGMQQPAFQLQAALAGNPLAQLQGQPLLFNAAALQTNALQQSAFGMDPAAVQAALLANEQARFQLAAAAAQGRIPSSGNASAFGEQYLSNALATASLPSYQMNPALRTLNRFTPY.

Residues 156–180 (ATTAGSTNGSAAVTQPDPSTSSGPD) show a composition bias toward low complexity. The disordered stretch occupies residues 156-188 (ATTAGSTNGSAAVTQPDPSTSSGPDGPKRLHVS). The 77-residue stretch at 183–259 (KRLHVSNIPF…RKIEVNCATA (77 aa)) folds into the RRM domain.

As to quaternary structure, interacts with sup-12. As to expression, in males and hermaphrodites expressed in a subset of cells in the head and tail. Expressed in the pharynx, intestine and in muscles from the vulva and body wall.

It is found in the nucleus. RNA-binding protein that regulates tissue-specific alternative splicing events by binding to 5'-UGCAUG-3' and 5'-GCACG-3' elements. Also binds to poly(A), poly(G), poly(C), or poly(U) stretches of RNA. Plays a role in the sex determination pathway and X chromosome dosage compensation, and together with sex-1 is involved in making the distinction between one and two X-chromosomes. Binds to 5'-GCAUG-3' and 5'-GCACG-3' elements in intron 6 of the pre-mRNA of the sex-determining factor xol-1 to promote its alternative splicing and together with sex-1 negatively regulates the expression of xol-1 to promote hermaphrodite development. Negatively regulates the expression of the active isoform of xol-1 (isoform b) by promoting intron 6 retention and the deletion of exon 7 coding sequences in hermaphrodite embryos. Furthermore, binding to the pre-mRNA of xol-1 can also direct the use of an alternative 3' splice site enabling the xol-1 transcript to be trans-spliced to unrelated genes on chromosome 2, which also leads to xol-1 exon 7 deletion. Does not seem to regulate the retention of introns 1 to 5 of xol-1 pre-mRNA. Plays a role in the association of the dosage compensation complex proteins dpy-27 and sdc-3 with the hermaphrodite X chromosomes. Binds to 5'-UGCAUG-3' elements in intron 7 of the pre-mRNA of unc-32 to promote its alternative splicing in neuronal tissues. Binds to 5'-UGCAUG-3' elements in intron 4 of the pre-mRNA of egl-15 to promote its alternative splicing in body wall muscle tissues. Promotes binding of RNA-binding protein sup-12 to target RNA. Plays a role in male mating behavior. This Caenorhabditis elegans protein is Sex determination protein fox-1.